We begin with the raw amino-acid sequence, 203 residues long: UPF0637 protein MCCL_0722 (203 aa).

The protein belongs to the UPF0637 family.

This is UPF0637 protein MCCL_0722 from Macrococcus caseolyticus (strain JCSC5402) (Macrococcoides caseolyticum).